The primary structure comprises 1152 residues: DNA-directed RNA polymerase subunit beta' (1152 aa).

Residues cysteine 60, cysteine 62, cysteine 75, and cysteine 78 each coordinate Zn(2+). Aspartate 449, aspartate 451, and aspartate 453 together coordinate Mg(2+). Zn(2+) contacts are provided by cysteine 779, cysteine 853, cysteine 860, and cysteine 863.

The protein belongs to the RNA polymerase beta' chain family. In terms of assembly, the RNAP catalytic core consists of 2 alpha, 1 beta, 1 beta' and 1 omega subunit. When a sigma factor is associated with the core the holoenzyme is formed, which can initiate transcription. Requires Mg(2+) as cofactor. Zn(2+) serves as cofactor.

It carries out the reaction RNA(n) + a ribonucleoside 5'-triphosphate = RNA(n+1) + diphosphate. In terms of biological role, DNA-dependent RNA polymerase catalyzes the transcription of DNA into RNA using the four ribonucleoside triphosphates as substrates. This is DNA-directed RNA polymerase subunit beta' from Carboxydothermus hydrogenoformans (strain ATCC BAA-161 / DSM 6008 / Z-2901).